Here is a 255-residue protein sequence, read N- to C-terminus: ParA family protein CPn_0805/CP_1066/CPj0805/CpB0834 (255 aa).

The protein belongs to the ParA family.

The polypeptide is ParA family protein CPn_0805/CP_1066/CPj0805/CpB0834 (Chlamydia pneumoniae (Chlamydophila pneumoniae)).